The chain runs to 523 residues: Sporulation protein 23 (523 aa).

As to quaternary structure, interacts with SPO1 in meiosis.

Functionally, regulates expression of PIS1. The protein is Sporulation protein 23 (SPO23) of Saccharomyces cerevisiae (strain ATCC 204508 / S288c) (Baker's yeast).